The primary structure comprises 287 residues: 4-hydroxybenzoate octaprenyltransferase (287 aa).

Helical transmembrane passes span 41–61, 89–109, 133–153, 158–178, 202–224, and 267–287; these read WPLLVIFSLGTLLMRSAGCAM, WEAIAIAVGLAFVSFLLILPL, FFAIPQAYLGIAFGFGIPMAF, DTVPTIAWVMLIANIFWSVAY, FGRFDVAAVMLCYAVTLGIYVWI, and NNWLGGVLFAGIAAHYLLAGS.

This sequence belongs to the UbiA prenyltransferase family. Requires Mg(2+) as cofactor.

It is found in the cell inner membrane. The catalysed reaction is all-trans-octaprenyl diphosphate + 4-hydroxybenzoate = 4-hydroxy-3-(all-trans-octaprenyl)benzoate + diphosphate. Its pathway is cofactor biosynthesis; ubiquinone biosynthesis. Its function is as follows. Catalyzes the prenylation of para-hydroxybenzoate (PHB) with an all-trans polyprenyl group. Mediates the second step in the final reaction sequence of ubiquinone-8 (UQ-8) biosynthesis, which is the condensation of the polyisoprenoid side chain with PHB, generating the first membrane-bound Q intermediate 3-octaprenyl-4-hydroxybenzoate. This Burkholderia lata (strain ATCC 17760 / DSM 23089 / LMG 22485 / NCIMB 9086 / R18194 / 383) protein is 4-hydroxybenzoate octaprenyltransferase.